Consider the following 555-residue polypeptide: GPI-anchor transamidase component PIGS (555 aa).

Topologically, residues 2–18 (AAAGAAATHLEVARGKR) are cytoplasmic. The a cardiolipin site is built by R15 and R18. A helical transmembrane segment spans residues 19–39 (AALFFAAVAIVLGLPLWWKTT). The Lumenal segment spans residues 40–517 (ETYRASLPYS…LHLLYFPDDQ (478 aa)). N267 and N370 each carry an N-linked (GlcNAc...) asparagine glycan. The helical transmembrane segment at 518-532 (KFAIYIPLFLPMAVP) threads the bilayer. The Cytoplasmic portion of the chain corresponds to 533–555 (ILLSLVKIFLETRKSWRKPEKTD).

The protein belongs to the PIGS family. As to quaternary structure, heteropentamer. Part of the GPI-anchor transamidase complex, consisting of PIGK, PIGT, PIGS, PIGU and GAA1.

It localises to the endoplasmic reticulum membrane. Its pathway is glycolipid biosynthesis; glycosylphosphatidylinositol-anchor biosynthesis. Functionally, component of the glycosylphosphatidylinositol-anchor (GPI-anchor) transamidase (GPI-T) complex that catalyzes the formation of the linkage between a proprotein and a GPI-anchor and participates in GPI anchored protein biosynthesis. The protein is GPI-anchor transamidase component PIGS of Homo sapiens (Human).